We begin with the raw amino-acid sequence, 174 residues long: Gamma-crystallin F (174 aa).

Beta/gamma crystallin 'Greek key' domains are found at residues 2-40 (GKITFYEDRGFQGRHYECSTDHSNLQPYFSRCNSVRVDS) and 41-83 (GCWM…HLIP). Residues 84 to 87 (HSSS) form a connecting peptide region. 2 Beta/gamma crystallin 'Greek key' domains span residues 88-128 (HRIR…HVIE) and 129-171 (GYWV…RRIM).

It belongs to the beta/gamma-crystallin family.

Its function is as follows. Crystallins are the dominant structural components of the vertebrate eye lens. In Rattus norvegicus (Rat), this protein is Gamma-crystallin F (Crygf).